A 416-amino-acid chain; its full sequence is MTKADLIVGIQWGDEGKGKIVDMLSQNYDVVCRSGGGHNAGHTIWVDGMRYALHLVPSGILHKNIINIIGNGVVVNPEVLISEMAQFDHLEGRFFISDRAHLNLAHHSLIDQAKERLKGDKAIGTTGKGIGPAYSDKISRSGHRVGELLDPKALCESLMKDFESNKPYFDALSIEIPPKDKILADLVRFKDVLAPFITNTTELLWRAMDDNKKVLLEGAQGTLLDIDHGTYPYVTSSNTVSAGACTGLGLSPKSIGKVIGIIKAYSTRVGNGAFPTEDLGSDGENLCEIGKEFGTTTGRKRRCGWLDVVGIKYSSRLNGVDTYALMKLDVLDGFKNVKICKAYEYKGEVIDYFPSDLQNATPIYEELEGWDSINGIKKYEDLPLNARKYIERIEELTGVKIGFISTSPERNDTIVR.

GTP is bound by residues 13 to 19 (GDEGKGK) and 41 to 43 (GHT). Asp14 serves as the catalytic Proton acceptor. The Mg(2+) site is built by Asp14 and Gly41. IMP contacts are provided by residues 14–17 (DEGK), 39–42 (NAGH), Thr126, Arg140, Gln220, Thr235, and Arg299. The active-site Proton donor is His42. Residue 295-301 (TTTGRKR) participates in substrate binding. GTP contacts are provided by residues Arg301, 327–329 (KLD), and 405–407 (STS).

This sequence belongs to the adenylosuccinate synthetase family. Homodimer. The cofactor is Mg(2+).

The protein localises to the cytoplasm. The catalysed reaction is IMP + L-aspartate + GTP = N(6)-(1,2-dicarboxyethyl)-AMP + GDP + phosphate + 2 H(+). It participates in purine metabolism; AMP biosynthesis via de novo pathway; AMP from IMP: step 1/2. Its function is as follows. Plays an important role in the de novo pathway of purine nucleotide biosynthesis. Catalyzes the first committed step in the biosynthesis of AMP from IMP. This is Adenylosuccinate synthetase from Campylobacter fetus subsp. fetus (strain 82-40).